The chain runs to 188 residues: Kininogen (188 aa).

N36, N150, and N182 each carry an N-linked (GlcNAc...) asparagine glycan.

Post-translationally, bradykinin is released from kininogen by kallikrein. In terms of processing, N-glycosylated. Contains O-acetylated sialic acids as terminal elements on biantennary and triantennary N-glycans.

Inhibits papain and ficin (cysteine proteinases) but not trypsin (a serine proteinase). This Anarhichas minor (Arctic spotted wolffish) protein is Kininogen.